We begin with the raw amino-acid sequence, 222 residues long: Superoxide dismutase [Mn], mitochondrial (222 aa).

The N-terminal 24 residues, 1–24, are a transit peptide targeting the mitochondrion; the sequence is MLSRAVCGTGRQLAPALGYLGSRQ. H50 contributes to the Mn(2+) binding site. At Y58 the chain carries 3'-nitrotyrosine. Residues K68 and K75 each carry the N6-acetyllysine; alternate modification. An N6-succinyllysine; alternate mark is found at K68 and K75. A Mn(2+)-binding site is contributed by H98. K114 is subject to N6-acetyllysine. Residues K122 and K130 each carry the N6-acetyllysine; alternate modification. K122 and K130 each carry N6-succinyllysine; alternate. D183 and H187 together coordinate Mn(2+). At K202 the chain carries N6-acetyllysine.

Belongs to the iron/manganese superoxide dismutase family. As to quaternary structure, homotetramer. Requires Mn(2+) as cofactor. Nitrated under oxidative stress. Nitration coupled with oxidation inhibits the catalytic activity. Post-translationally, acetylation at Lys-122 decreases enzymatic activity. Deacetylated by SIRT3 upon exposure to ionizing radiations or after long fasting. In terms of processing, polyubiquitinated; leading to proteasomal degradation. Deubiquitinated by USP36 which increases protein stability.

The protein localises to the mitochondrion matrix. The catalysed reaction is 2 superoxide + 2 H(+) = H2O2 + O2. Destroys superoxide anion radicals which are normally produced within the cells and which are toxic to biological systems. The polypeptide is Superoxide dismutase [Mn], mitochondrial (SOD2) (Macaca nemestrina (Pig-tailed macaque)).